The chain runs to 425 residues: Serine--tRNA ligase (425 aa).

Position 231 to 233 (231 to 233) interacts with L-serine; the sequence is TAE. 262–264 provides a ligand contact to ATP; it reads RSE. Glutamate 285 lines the L-serine pocket. An ATP-binding site is contributed by 349–352; sequence EISS. Serine 385 lines the L-serine pocket.

It belongs to the class-II aminoacyl-tRNA synthetase family. Type-1 seryl-tRNA synthetase subfamily. In terms of assembly, homodimer. The tRNA molecule binds across the dimer.

It localises to the cytoplasm. It catalyses the reaction tRNA(Ser) + L-serine + ATP = L-seryl-tRNA(Ser) + AMP + diphosphate + H(+). It carries out the reaction tRNA(Sec) + L-serine + ATP = L-seryl-tRNA(Sec) + AMP + diphosphate + H(+). The protein operates within aminoacyl-tRNA biosynthesis; selenocysteinyl-tRNA(Sec) biosynthesis; L-seryl-tRNA(Sec) from L-serine and tRNA(Sec): step 1/1. Functionally, catalyzes the attachment of serine to tRNA(Ser). Is also able to aminoacylate tRNA(Sec) with serine, to form the misacylated tRNA L-seryl-tRNA(Sec), which will be further converted into selenocysteinyl-tRNA(Sec). This chain is Serine--tRNA ligase, found in Bartonella henselae (strain ATCC 49882 / DSM 28221 / CCUG 30454 / Houston 1) (Rochalimaea henselae).